Reading from the N-terminus, the 1076-residue chain is DNA-directed RNA polymerase subunit beta (1076 aa).

Belongs to the RNA polymerase beta chain family. In plastids the minimal PEP RNA polymerase catalytic core is composed of four subunits: alpha, beta, beta', and beta''. When a (nuclear-encoded) sigma factor is associated with the core the holoenzyme is formed, which can initiate transcription.

It localises to the plastid. The protein localises to the chloroplast. The catalysed reaction is RNA(n) + a ribonucleoside 5'-triphosphate = RNA(n+1) + diphosphate. DNA-dependent RNA polymerase catalyzes the transcription of DNA into RNA using the four ribonucleoside triphosphates as substrates. This is DNA-directed RNA polymerase subunit beta from Agrostis stolonifera (Creeping bentgrass).